The following is a 279-amino-acid chain: Pantothenate synthetase (279 aa).

Position 31–38 (31–38 (MGNLHGGH)) interacts with ATP. Residue histidine 38 is the Proton donor of the active site. Residue glutamine 62 participates in (R)-pantoate binding. Glutamine 62 lines the beta-alanine pocket. Residue 150–153 (GRKD) participates in ATP binding. Glutamine 156 contacts (R)-pantoate. Residues valine 179 and 187-190 (KSSR) contribute to the ATP site.

The protein belongs to the pantothenate synthetase family. As to quaternary structure, homodimer.

The protein localises to the cytoplasm. The catalysed reaction is (R)-pantoate + beta-alanine + ATP = (R)-pantothenate + AMP + diphosphate + H(+). It participates in cofactor biosynthesis; (R)-pantothenate biosynthesis; (R)-pantothenate from (R)-pantoate and beta-alanine: step 1/1. Catalyzes the condensation of pantoate with beta-alanine in an ATP-dependent reaction via a pantoyl-adenylate intermediate. This is Pantothenate synthetase from Stenotrophomonas maltophilia (strain K279a).